Consider the following 421-residue polypeptide: Enolase (421 aa).

Gln-165 serves as a coordination point for (2R)-2-phosphoglycerate. The active-site Proton donor is Glu-207. Mg(2+) contacts are provided by Asp-244, Glu-285, and Asp-312. 4 residues coordinate (2R)-2-phosphoglycerate: Lys-337, Arg-366, Ser-367, and Lys-388. The active-site Proton acceptor is the Lys-337.

The protein belongs to the enolase family. The cofactor is Mg(2+).

Its subcellular location is the cytoplasm. The protein resides in the secreted. The protein localises to the cell surface. The enzyme catalyses (2R)-2-phosphoglycerate = phosphoenolpyruvate + H2O. Its pathway is carbohydrate degradation; glycolysis; pyruvate from D-glyceraldehyde 3-phosphate: step 4/5. Functionally, catalyzes the reversible conversion of 2-phosphoglycerate (2-PG) into phosphoenolpyruvate (PEP). It is essential for the degradation of carbohydrates via glycolysis. The sequence is that of Enolase from Ehrlichia ruminantium (strain Welgevonden).